A 203-amino-acid chain; its full sequence is MSSPLECAKYLLSAHTPHQLPSDDGSEVAFAGRSNAGKSSVLNTLTRQNALARVSKTPGRTQQLVYFTVTPQRYLVDLPGYGYAKVPKELQIHWQAFIDTYFHHRQSLRGLVVVMDIRHPLKEYDLQMLAYARQRGLPAQALLTKADKLGRGQQAQTLQKVRNELTKHFADHINIQTFSSKSRQGVEQLHTVIETWLGLARSG.

In terms of domain architecture, EngB-type G spans 24 to 199 (DGSEVAFAGR…HTVIETWLGL (176 aa)). Residues 32 to 39 (GRSNAGKS), 59 to 63 (GRTQQ), 77 to 80 (DLPG), 144 to 147 (TKAD), and 178 to 180 (FSS) contribute to the GTP site. Residues serine 39 and threonine 61 each contribute to the Mg(2+) site.

It belongs to the TRAFAC class TrmE-Era-EngA-EngB-Septin-like GTPase superfamily. EngB GTPase family. The cofactor is Mg(2+).

Necessary for normal cell division and for the maintenance of normal septation. In Xylella fastidiosa (strain Temecula1 / ATCC 700964), this protein is Probable GTP-binding protein EngB.